The primary structure comprises 278 residues: Probable velvet family sexual development regulator SCHCODRAFT_28806 (278 aa).

A Velvet domain is found at 51–255 (GRTIRASLDE…ARVGVRLSVR (205 aa)). Residues 257 to 278 (TGKKATTKRRKRSDSFDEDDSS) are disordered.

This sequence belongs to the velvet family.

Its subcellular location is the nucleus. Velvet-domain-containing protein that probably acts as a positive regulator of sexual development. This is Probable velvet family sexual development regulator SCHCODRAFT_28806 from Schizophyllum commune (strain H4-8 / FGSC 9210) (Split gill fungus).